The primary structure comprises 105 residues: Pyrimidine/purine nucleoside phosphorylase (105 aa).

The protein belongs to the nucleoside phosphorylase PpnP family.

It carries out the reaction a purine D-ribonucleoside + phosphate = a purine nucleobase + alpha-D-ribose 1-phosphate. It catalyses the reaction adenosine + phosphate = alpha-D-ribose 1-phosphate + adenine. The catalysed reaction is cytidine + phosphate = cytosine + alpha-D-ribose 1-phosphate. The enzyme catalyses guanosine + phosphate = alpha-D-ribose 1-phosphate + guanine. It carries out the reaction inosine + phosphate = alpha-D-ribose 1-phosphate + hypoxanthine. It catalyses the reaction thymidine + phosphate = 2-deoxy-alpha-D-ribose 1-phosphate + thymine. The catalysed reaction is uridine + phosphate = alpha-D-ribose 1-phosphate + uracil. The enzyme catalyses xanthosine + phosphate = alpha-D-ribose 1-phosphate + xanthine. In terms of biological role, catalyzes the phosphorolysis of diverse nucleosides, yielding D-ribose 1-phosphate and the respective free bases. Can use uridine, adenosine, guanosine, cytidine, thymidine, inosine and xanthosine as substrates. Also catalyzes the reverse reactions. The chain is Pyrimidine/purine nucleoside phosphorylase from Anaeromyxobacter sp. (strain Fw109-5).